We begin with the raw amino-acid sequence, 117 residues long: Galanin-like peptide (117 aa).

The N-terminal stretch at 1 to 23 (MACSVHLVLFLTILLSLAETPES) is a signal peptide. Positions 86 to 117 (TMGETFVKANTGDMHILDKNVPKEEATLDSES) are excised as a propeptide.

The protein belongs to the galanin family. Isoform 2 is found in brain, thymus and skin. Isoform 2 is found in the skin, in pericytes covering microvascular arterioles and venules on their abluminal surfaces. In larger vessels, isoform 2 is expressed in layers of smooth muscle cells. Isoform 2 is not detected in endothelial cells.

The protein localises to the secreted. Hypothalamic neuropeptide which binds to the G-protein-coupled galanin receptors (GALR1, GALR2 and GALR3). Involved in a large number of putative physiological functions in CNS homeostatic processes, including the regulation of gonadotropin-releasing hormone secretion. Its function is as follows. Exhibits antimicrobial activity against Gram-negative bacterias, inducing bacterial membrane blebbing. Exhibits potent and dose-dependent vasoconstrictor and anti-edema activity in the cutaneous microvasculature, a physiologic effects which does not appear to be mediated via GALR1 or GALR2. This Mus musculus (Mouse) protein is Galanin-like peptide (Galp).